A 430-amino-acid chain; its full sequence is Serine--tRNA ligase (430 aa).

237–239 (TAE) is a binding site for L-serine. 268 to 270 (RAE) contacts ATP. Residue glutamate 291 participates in L-serine binding. Position 355–358 (355–358 (EVSS)) interacts with ATP. Serine 391 contacts L-serine.

Belongs to the class-II aminoacyl-tRNA synthetase family. Type-1 seryl-tRNA synthetase subfamily. Homodimer. The tRNA molecule binds across the dimer.

The protein localises to the cytoplasm. The catalysed reaction is tRNA(Ser) + L-serine + ATP = L-seryl-tRNA(Ser) + AMP + diphosphate + H(+). It catalyses the reaction tRNA(Sec) + L-serine + ATP = L-seryl-tRNA(Sec) + AMP + diphosphate + H(+). Its pathway is aminoacyl-tRNA biosynthesis; selenocysteinyl-tRNA(Sec) biosynthesis; L-seryl-tRNA(Sec) from L-serine and tRNA(Sec): step 1/1. Catalyzes the attachment of serine to tRNA(Ser). Is also able to aminoacylate tRNA(Sec) with serine, to form the misacylated tRNA L-seryl-tRNA(Sec), which will be further converted into selenocysteinyl-tRNA(Sec). This is Serine--tRNA ligase from Baumannia cicadellinicola subsp. Homalodisca coagulata.